Here is a 98-residue protein sequence, read N- to C-terminus: Small ribosomal subunit protein uS19c (98 aa).

It belongs to the universal ribosomal protein uS19 family.

The protein localises to the plastid. It localises to the chloroplast. Functionally, protein S19 forms a complex with S13 that binds strongly to the 16S ribosomal RNA. In Jasminum nudiflorum (Winter jasmine), this protein is Small ribosomal subunit protein uS19c.